The sequence spans 350 residues: MRVKAPGRINIIGEHTDYNDGYVLPFAVNRFVFLTIEDSGKFVFHSENMNETVEMEKIEKLNRWTDYISGVIKAFEKRGYKVSPVKISVSSNLPMGAGLSSSAALEMATAYAISEHFGFHLPKLELVKIAREAEVEFVGVRCGIMDQFTSAFGKKDHAIFLDTMTLEYEYVPLKLEGYEINLVDSNVKHELSSSEYNKRRQECEEVLRVLGKRSFREVTKEDLKKLPDVLKKRAQHVLEENERVLKSVQALKEGDFETLGRLLFSSHESLRDLYEVSCEETDFIVDFLKGREGILGARMVGGGFGGGVIVLSKKGAFEKIKEELKNAYRDRFKIELTFHEIESADGVQKI.

Position 14 to 17 (E14 to D17) interacts with substrate. Residues S46 and G96–S102 contribute to the ATP site. S102 and E134 together coordinate Mg(2+). D146 (proton acceptor) is an active-site residue. Residue Y196 coordinates substrate.

This sequence belongs to the GHMP kinase family. GalK subfamily.

It is found in the cytoplasm. It carries out the reaction alpha-D-galactose + ATP = alpha-D-galactose 1-phosphate + ADP + H(+). The protein operates within carbohydrate metabolism; galactose metabolism. Functionally, catalyzes the transfer of the gamma-phosphate of ATP to D-galactose to form alpha-D-galactose-1-phosphate (Gal-1-P). This chain is Galactokinase, found in Thermotoga neapolitana (strain ATCC 49049 / DSM 4359 / NBRC 107923 / NS-E).